The following is a 185-amino-acid chain: Comitin (185 aa).

The Bulb-type lectin domain occupies 1–123 (MELLRQGEHL…YKQILYSSKP (123 aa)). The interval 138-185 (SGHPQSAYPPQQPGYGYPAQPGYPPQPGYPPQHGYPPQHGYPQQPGYY) is disordered. Over residues 141–157 (PQSAYPPQQPGYGYPAQ) the composition is skewed to low complexity. 5 consecutive repeat copies span residues 153 to 158 (GYPAQP), 159 to 164 (GYPPQP), 165 to 170 (GYPPQH), 171 to 176 (GYPPQH), and 177 to 182 (GYPQQP). The segment at 153-182 (GYPAQPGYPPQPGYPPQHGYPPQHGYPQQP) is 5 X 6 AA tandem repeats of G-Y-P-X-Q-[PH]. Residues 158–171 (PGYPPQPGYPPQHG) are compositionally biased toward pro residues. A compositionally biased stretch (low complexity) spans 172 to 185 (YPPQHGYPQQPGYY).

In terms of assembly, homodimer in solution. In terms of processing, the N-terminus is blocked.

It is found in the golgi apparatus membrane. The protein resides in the endomembrane system. Its subcellular location is the cytoplasm. It localises to the cytoskeleton. Functionally, may have a role in cell motility. It has high affinity for both G-actin and F-actin. Binds to vesicle membranes via mannose residues and, by way of its interaction with actin, links these membranes to the cytoskeleton. The sequence is that of Comitin (comA) from Dictyostelium discoideum (Social amoeba).